We begin with the raw amino-acid sequence, 147 residues long: uncharacterized protein (147 aa).

Residues P29–H147 form a disordered region. Polar residues-rich tracts occupy residues S34–N45 and P60–S73. Residues P75–N92 are compositionally biased toward gly residues. Over residues D122 to H147 the composition is skewed to basic residues.

This is an uncharacterized protein from Caenorhabditis elegans.